Here is a 317-residue protein sequence, read N- to C-terminus: Small ribosomal subunit protein RACK1 (317 aa).

WD repeat units lie at residues 13 to 44 (GHSG…IMWK), 61 to 91 (GHSH…RLWD), 103 to 133 (GHTK…KLWN), 146 to 178 (SHTE…KVWN), 190 to 220 (GHTG…MLWD), 231 to 260 (DGGD…KIWD), and 281 to 311 (AEPP…RVWQ).

This sequence belongs to the WD repeat G protein beta family. Ribosomal protein RACK1 subfamily.

Its subcellular location is the cytoplasm. Involved in the recruitment, assembly and/or regulation of a variety of signaling molecules. Interacts with a wide variety of proteins and plays a role in many cellular processes. Required for VANGL2 membrane localization, inhibits Wnt signaling and regulates cellular polarization and oriented cell division during gastrulation. This Danio rerio (Zebrafish) protein is Small ribosomal subunit protein RACK1 (gnb2l1).